Consider the following 213-residue polypeptide: Glycerol-3-phosphate acyltransferase (213 aa).

6 consecutive transmembrane segments (helical) span residues 2–22 (ITIVLLILAYLLGSIPSGLWI), 52–74 (AGMATFVIDFFKGTLATLLPIIF), 81–100 (PLIFGLLAVIGHTFPIFAGF), 112–132 (VIFGFAPIFCLYLAIIFFGAL), 143–163 (VTASIAAVIGVLLFPLFGFIL), and 164–184 (SNYDSLFITIILALASLIIIR).

The protein belongs to the PlsY family. As to quaternary structure, probably interacts with PlsX.

The protein resides in the cell membrane. The enzyme catalyses an acyl phosphate + sn-glycerol 3-phosphate = a 1-acyl-sn-glycero-3-phosphate + phosphate. It functions in the pathway lipid metabolism; phospholipid metabolism. In terms of biological role, catalyzes the transfer of an acyl group from acyl-phosphate (acyl-PO(4)) to glycerol-3-phosphate (G3P) to form lysophosphatidic acid (LPA). This enzyme utilizes acyl-phosphate as fatty acyl donor, but not acyl-CoA or acyl-ACP. The polypeptide is Glycerol-3-phosphate acyltransferase (Streptococcus pneumoniae (strain Hungary19A-6)).